The chain runs to 258 residues: Global transcriptional regulator CodY (258 aa).

A GAF domain region spans residues 1–156 (MSSLLTKTRM…SATIVGMEML (156 aa)). Positions 204-223 (ASKIADKVGITRSVIVNALR) form a DNA-binding region, H-T-H motif.

This sequence belongs to the CodY family.

The protein resides in the cytoplasm. In terms of biological role, DNA-binding global transcriptional regulator which is involved in the adaptive response to starvation and acts by directly or indirectly controlling the expression of numerous genes in response to nutrient availability. During rapid exponential growth, CodY is highly active and represses genes whose products allow adaptation to nutrient depletion. The protein is Global transcriptional regulator CodY of Clostridium beijerinckii (strain ATCC 51743 / NCIMB 8052) (Clostridium acetobutylicum).